Consider the following 166-residue polypeptide: Large ribosomal subunit protein uL10 (166 aa).

The protein belongs to the universal ribosomal protein uL10 family. In terms of assembly, part of the ribosomal stalk of the 50S ribosomal subunit. The N-terminus interacts with L11 and the large rRNA to form the base of the stalk. The C-terminus forms an elongated spine to which L12 dimers bind in a sequential fashion forming a multimeric L10(L12)X complex.

Functionally, forms part of the ribosomal stalk, playing a central role in the interaction of the ribosome with GTP-bound translation factors. The sequence is that of Large ribosomal subunit protein uL10 from Shewanella oneidensis (strain ATCC 700550 / JCM 31522 / CIP 106686 / LMG 19005 / NCIMB 14063 / MR-1).